The chain runs to 1132 residues: Fas-binding factor 1 homolog (1132 aa).

Disordered regions lie at residues 18–50 (DDLL…LQAS), 65–84 (AEDM…PQAV), and 89–570 (KEMD…QSYE). Positions 35–46 (AGVSSGRARGSS) are enriched in low complexity. Composition is skewed to basic and acidic residues over residues 134 to 148 (APEK…DKKP) and 189 to 206 (GSER…EKDP). Acidic residues predominate over residues 226–235 (TFEDDDDDMM). Composition is skewed to basic and acidic residues over residues 244–270 (QKGD…DELL) and 278–303 (ILER…PEKE). 2 stretches are compositionally biased toward polar residues: residues 331–341 (RQSVSRFSAEN) and 388–410 (AKTS…SKPN). Low complexity-rich tracts occupy residues 458–480 (ATST…ADSS) and 511–520 (PSDPAASSPA). Residues 534-548 (TMPSTPLQAASQLQA) are compositionally biased toward polar residues. 3 coiled-coil regions span residues 576–727 (RAAL…TSAT), 769–882 (ARQR…LAVE), and 918–1044 (LAKE…HKKL).

The protein resides in the cytoplasm. It is found in the cytoskeleton. It localises to the microtubule organizing center. Its subcellular location is the centrosome. The protein localises to the centriole. The protein resides in the spindle pole. It is found in the cell junction. Its function is as follows. Keratin-binding protein required for epithelial cell polarization. Required for ciliogenesis. This Gallus gallus (Chicken) protein is Fas-binding factor 1 homolog (FBF1).